Here is a 258-residue protein sequence, read N- to C-terminus: Acetylglutamate kinase (258 aa).

Substrate-binding positions include 44 to 45 (GG), R66, and N158. ATP contacts are provided by residues 181-186 (DVSGIL) and 209-211 (IIT).

The protein belongs to the acetylglutamate kinase family. ArgB subfamily. Homodimer.

The protein localises to the cytoplasm. It carries out the reaction N-acetyl-L-glutamate + ATP = N-acetyl-L-glutamyl 5-phosphate + ADP. Its pathway is amino-acid biosynthesis; L-arginine biosynthesis; N(2)-acetyl-L-ornithine from L-glutamate: step 2/4. Its function is as follows. Catalyzes the ATP-dependent phosphorylation of N-acetyl-L-glutamate. The polypeptide is Acetylglutamate kinase (Citrobacter koseri (strain ATCC BAA-895 / CDC 4225-83 / SGSC4696)).